A 259-amino-acid chain; its full sequence is Ubiquitin-conjugating enzyme E2 J2 (259 aa).

Residues 1–226 are Cytoplasmic-facing; the sequence is MSNNSNKRAP…AGLPQANRHH (226 aa). The UBC core domain occupies 12 to 162; the sequence is TATQRLKQDY…DKVFCELFPE (151 aa). Catalysis depends on Cys-94, which acts as the Glycyl thioester intermediate. Residues 227 to 247 traverse the membrane as a helical; Anchor for type IV membrane protein segment; sequence GLLGGALANLFVIVGFAAFAY. At 248–259 the chain is on the lumenal side; it reads TVKYVLRSIAQE.

It belongs to the ubiquitin-conjugating enzyme family. In terms of assembly, interacts with murid herpesvirus 4 protein K3 (mK3).

It localises to the endoplasmic reticulum membrane. The enzyme catalyses S-ubiquitinyl-[E1 ubiquitin-activating enzyme]-L-cysteine + [E2 ubiquitin-conjugating enzyme]-L-cysteine = [E1 ubiquitin-activating enzyme]-L-cysteine + S-ubiquitinyl-[E2 ubiquitin-conjugating enzyme]-L-cysteine.. It functions in the pathway protein modification; protein ubiquitination. In terms of biological role, catalyzes the covalent attachment of ubiquitin to other proteins. Seems to function in the selective degradation of misfolded membrane proteins from the endoplasmic reticulum (ERAD). In cooperation with the GATOR2 complex, catalyzes 'Lys-6'-linked ubiquitination of NPRL2. Its function is as follows. In case of infection by the murid herpesvirus 4, its association with the viral E3 ligase K3 mediates ubiquitination of host surface class I (MHC-I) H-2D(b)/H2-D1 and H-2K(b)/H2-K1 molecules before they exit the endoplasmic reticulum, leading to their degradation by the ERAD system, thus blocking the immune detection of virus-infected cells. The complex formed with the murid herpesvirus 4 protein K3 mediates ubiquitination of lysine, as well as serine and threonine residues present in the cytoplasmic tail of surface class I molecules and promotes ubiquitination of hydroxylated serine or threonine residues via ester bonds instead of the classical isopeptide linkage. The protein is Ubiquitin-conjugating enzyme E2 J2 (Ube2j2) of Mus musculus (Mouse).